A 403-amino-acid polypeptide reads, in one-letter code: MAKIMAVNAGSSSLKFQLLEMPNETMIAVGLVERVGKDDAIFTIKYGEGQKFTDVLPLATHKEAVELSLEKLMEFGIISSYDEIKGVGHRVLHGKEKYADSVIITEDVMQDIESYTELGPLHIPPNLIGIRAFQAILPNVPQVAVFDTAFHQTMPEENFLYSLPYEYYTEYGIRKYGFHGTSHKYVTERASELLGRPLQDLRLISCHLGSGASIAAVAGGESIDTTMGFTPLEGITMGTRSGSLDPALIPFLMEKTGKTAEDVLNVMNKESGIYGLSGLSSDLRDVQTAAKEGNHRSEMALRIFANRIHGYIGQYAAEMNGVDAIIFTAGVGENSDSIRERVLRGLEFMGVYWDPSLNNGARGEELFINYPHSPVKVIIIPTNEELMIARDTVRVGGLVEQNA.

Mg(2+) is bound at residue Asn8. Lys15 is a binding site for ATP. Arg90 is a substrate binding site. The active-site Proton donor/acceptor is Asp147. Residues 207 to 211 (HLGSG), 282 to 284 (DLR), and 330 to 334 (GVGEN) each bind ATP. Residue Glu384 coordinates Mg(2+).

The protein belongs to the acetokinase family. As to quaternary structure, homodimer. Mg(2+) is required as a cofactor. Requires Mn(2+) as cofactor.

It localises to the cytoplasm. It carries out the reaction acetate + ATP = acetyl phosphate + ADP. Its pathway is metabolic intermediate biosynthesis; acetyl-CoA biosynthesis; acetyl-CoA from acetate: step 1/2. In terms of biological role, catalyzes the formation of acetyl phosphate from acetate and ATP. Can also catalyze the reverse reaction. The polypeptide is Acetate kinase (Exiguobacterium sibiricum (strain DSM 17290 / CCUG 55495 / CIP 109462 / JCM 13490 / 255-15)).